Reading from the N-terminus, the 400-residue chain is Opsin-3 (400 aa).

Over 1-38 (MYSGNRSGDQGYWEDGAGAEGAAPAGTRSPAPLFSPTA) the chain is Extracellular. A glycan (N-linked (GlcNAc...) asparagine) is linked at N5. The helical transmembrane segment at 39–63 (YERLALLLGCLALLGVGGNLLVLLL) threads the bilayer. Topologically, residues 64-75 (YSKFPRLRTPTH) are cytoplasmic. A helical membrane pass occupies residues 76–100 (LFLVNLSLGDLLVSLFGVTFTFASC). Topologically, residues 101-115 (LRNGWVWDAVGCAWD) are extracellular. C112 and C186 are joined by a disulfide. A helical transmembrane segment spans residues 116–135 (GFSGSLFGFVSITTLTVLAY). Topologically, residues 136 to 151 (ERYIRVVHARVINFSW) are cytoplasmic. The chain crosses the membrane as a helical span at residues 152 to 175 (AWRAITYIWLYSLAWAGAPLLGWN). The Extracellular segment spans residues 176–199 (RYILDIHGLGCTVDWRSKDANDSS). The N-linked (GlcNAc...) asparagine glycan is linked to N196. The helical transmembrane segment at 200 to 227 (FVLFLFLGCLVVPVGIIAHCYGHILYSV) threads the bilayer. At 228 to 253 (RMLRCVEDLQTIQVIKMLRYEKKVAK) the chain is on the cytoplasmic side. Residues 254 to 277 (MCFLMAFVFLTCWMPYIVTRFLVV) traverse the membrane as a helical segment. At 278 to 285 (NGYGHLVT) the chain is on the extracellular side. The helical transmembrane segment at 286-310 (PTVSIVSYLFAKSSTVYNPVIYIFM) threads the bilayer. K297 is modified (N6-(retinylidene)lysine). Topologically, residues 311–400 (NRKFRRSLLQ…KVDVIQVRPL (90 aa)) are cytoplasmic. The S-palmitoyl cysteine moiety is linked to residue C323.

Belongs to the G-protein coupled receptor 1 family. Opsin subfamily. In terms of assembly, interacts with MC1R; the interaction results in a decrease in MC1R-mediated cAMP signaling and ultimately a decrease in melanin production in melanocytes. Expressed in the eye (at protein level). Expressed in tracheal airway smooth muscle. Expressed in brown adipocyte tissue; expression becomes more abundant during differentiation. Strongly expressed in brain. Highly expressed in the preoptic area and paraventricular nucleus of the hypothalamus. Shows highly patterned expression in other regions of the brain, being enriched in selected regions of the cerebral cortex, cerebellar Purkinje cells, a subset of striatal neurons, selected thalamic nuclei, and a subset of interneurons in the ventral horn of the spinal cord.

It is found in the cell membrane. The protein localises to the cytoplasm. Functionally, G-protein coupled receptor which selectively activates G proteins via ultraviolet A (UVA) light-mediated activation in the skin. Binds both 11-cis retinal and all-trans retinal. Regulates melanogenesis in melanocytes via inhibition of alpha-MSH-induced MC1R-mediated cAMP signaling, modulation of calcium flux, regulation of CAMK2 phosphorylation, and subsequently phosphorylation of CREB, p38, ERK and MITF in response to blue light. Plays a role in melanocyte survival through regulation of intracellular calcium levels and subsequent BCL2/RAF1 signaling. Additionally regulates apoptosis via cytochrome c release and subsequent activation of the caspase cascade. Required for TYR and DCT blue light-induced complex formation in melanocytes. Involved in keratinocyte differentiation in response to blue-light. Required for the UVA-mediated induction of calcium and mitogen-activated protein kinase signaling resulting in the expression of MMP1, MMP2, MMP3, MMP9 and TIMP1 in dermal fibroblasts. Plays a role in light-mediated glucose uptake, mitochondrial respiration and fatty acid metabolism in brown adipocyte tissues. May be involved in photorelaxation of airway smooth muscle cells, via blue-light dependent GPCR signaling pathways. This chain is Opsin-3 (Opn3), found in Mus musculus (Mouse).